A 161-amino-acid chain; its full sequence is pEARLI1-like lipid transfer protein 1 (161 aa).

The N-terminal stretch at 1–25 (MASKNSASLALFFALNILFFTLTVA) is a signal peptide. The A-1 repeat unit spans residues 32–39 (PSPKPKPV). The tract at residues 32-76 (PSPKPKPVPSPKPKPVQCPPPPRPSVPSPNPRPVTPPRTPGSSGN) is disordered. Pro residues predominate over residues 33–70 (SPKPKPVPSPKPKPVQCPPPPRPSVPSPNPRPVTPPRT). Positions 34–49 (PKPKPVPSPKPKPVQC) are 2 X 8 AA tandem repeats A of P-S-P-K-P-K-P-V. The stretch at 40-47 (PSPKPKPV) is one A-2 repeat.

It belongs to the plant LTP family. PEARLI1 subfamily. As to quaternary structure, self-interacts and binds to DIR1. Interacts with PDLP1.

Its subcellular location is the secreted. The protein resides in the cell wall. It localises to the endoplasmic reticulum. It is found in the cell junction. The protein localises to the plasmodesma. Its subcellular location is the plastid. The protein resides in the chloroplast. In terms of biological role, probable lipid transfer protein (LTP). Seems to control the flowering process and lignin synthesis. Together with DIR1, required for glycerol-3-phosphate- (G3P) and azelaic acid- (AA) induced systemic acquired resistance (SAR). Component of plant systemic immunity involved in priming defenses in a AA-dependent manner, by modulating production and/or translocation of a mobile signal(s) during SAR. Confers resistance to Botrytis cinerea and Pseudomonas syringae pv. tomato DC3000 and PmaDG3. May be involved in induced systemic resistance (ISR) mediated by non-pathogenic bacteria (e.g. P. fluorescens GM30). Prevents electrolyte leakage during freezing damage. In Arabidopsis thaliana (Mouse-ear cress), this protein is pEARLI1-like lipid transfer protein 1 (AZI1).